A 116-amino-acid chain; its full sequence is NADH-ubiquinone oxidoreductase chain 3 (116 aa).

The next 3 membrane-spanning stretches (helical) occupy residues 3–23 (LIMT…TVSF), 56–76 (FFLV…LLPL), and 87–107 (GTFF…IYEW).

This sequence belongs to the complex I subunit 3 family.

It localises to the mitochondrion membrane. The enzyme catalyses a ubiquinone + NADH + 5 H(+)(in) = a ubiquinol + NAD(+) + 4 H(+)(out). Core subunit of the mitochondrial membrane respiratory chain NADH dehydrogenase (Complex I) that is believed to belong to the minimal assembly required for catalysis. Complex I functions in the transfer of electrons from NADH to the respiratory chain. The immediate electron acceptor for the enzyme is believed to be ubiquinone. The chain is NADH-ubiquinone oxidoreductase chain 3 (MT-ND3) from Cyprinus carpio (Common carp).